Consider the following 102-residue polypeptide: Citrate lyase acyl carrier protein (102 aa).

At S14 the chain carries O-(phosphoribosyl dephospho-coenzyme A)serine.

Belongs to the CitD family. Oligomer with a subunit composition of (alpha,beta,gamma)6.

It is found in the cytoplasm. In terms of biological role, covalent carrier of the coenzyme of citrate lyase. The polypeptide is Citrate lyase acyl carrier protein (Streptococcus equi subsp. zooepidemicus (strain MGCS10565)).